A 143-amino-acid polypeptide reads, in one-letter code: MDQTLSEFGNVFVFFLLGVVFVAGGYLTARMLRPSRPNPVKTSTYECGEEAVGSAWVKFNIRFYVVALIFIIFDVEVVFLFPWATVFRQLGSFALVEALVFAGILILGLVYAWVKGDLDWVRPTPSVPKMPEMPASKSSSQRD.

A run of 3 helical transmembrane segments spans residues 8-28, 63-83, and 93-113; these read FGNV…GYLT, FYVV…LFPW, and FALV…VYAW.

This sequence belongs to the complex I subunit 3 family. As to quaternary structure, NDH-1 is composed of 14 different subunits. Subunits NuoA, H, J, K, L, M, N constitute the membrane sector of the complex.

Its subcellular location is the cell inner membrane. The enzyme catalyses a quinone + NADH + 5 H(+)(in) = a quinol + NAD(+) + 4 H(+)(out). Functionally, NDH-1 shuttles electrons from NADH, via FMN and iron-sulfur (Fe-S) centers, to quinones in the respiratory chain. The immediate electron acceptor for the enzyme in this species is believed to be a menaquinone. Couples the redox reaction to proton translocation (for every two electrons transferred, four hydrogen ions are translocated across the cytoplasmic membrane), and thus conserves the redox energy in a proton gradient. This Chlorobium phaeovibrioides (strain DSM 265 / 1930) (Prosthecochloris vibrioformis (strain DSM 265)) protein is NADH-quinone oxidoreductase subunit A.